An 81-amino-acid polypeptide reads, in one-letter code: Mipartoxin-1A (81 aa).

Positions 1 to 21 are cleaved as a signal peptide; the sequence is MKTLLLTLVVVTIVCLDLGNS. 4 disulfide bridges follow: Cys-24–Cys-42, Cys-35–Cys-61, Cys-65–Cys-73, and Cys-74–Cys-79.

Belongs to the three-finger toxin family. Short-chain subfamily. Expressed by the venom gland.

The protein localises to the secreted. Functionally, snake venom neurotoxin that blocks neuromuscular transmission, presenting a postsynaptic action through the nicotinic acetylcholine receptor (nAChR). Has no cytotoxic activity. This is Mipartoxin-1A from Micrurus mipartitus (Red-tailed coral snake).